Reading from the N-terminus, the 189-residue chain is Interferon alpha-1 (189 aa).

The N-terminal stretch at 1-23 (MAPTSAFLTALVLLSCNAICSLG) is a signal peptide. Intrachain disulfides connect Cys24–Cys122 and Cys52–Cys162.

Belongs to the alpha/beta interferon family. Interacts with CR2.

It localises to the secreted. In terms of biological role, produced by macrophages, IFN-alpha have antiviral activities. Interferon stimulates the production of two enzymes: a protein kinase and an oligoadenylate synthetase. In Sus scrofa (Pig), this protein is Interferon alpha-1.